Here is a 63-residue protein sequence, read N- to C-terminus: Small ribosomal subunit protein bS21 (63 aa).

Belongs to the bacterial ribosomal protein bS21 family.

The chain is Small ribosomal subunit protein bS21 from Parabacteroides distasonis (strain ATCC 8503 / DSM 20701 / CIP 104284 / JCM 5825 / NCTC 11152).